We begin with the raw amino-acid sequence, 447 residues long: UDP-N-acetylglucosamine 1-carboxyvinyltransferase (447 aa).

Position 27 to 28 (27 to 28) interacts with phosphoenolpyruvate; the sequence is KN. Arg97 serves as a coordination point for UDP-N-acetyl-alpha-D-glucosamine. Cys121 acts as the Proton donor in catalysis. Cys121 is modified (2-(S-cysteinyl)pyruvic acid O-phosphothioketal). UDP-N-acetyl-alpha-D-glucosamine-binding positions include 126 to 130, Asp314, and Val336; that span reads RPVDL.

Belongs to the EPSP synthase family. MurA subfamily.

It localises to the cytoplasm. It catalyses the reaction phosphoenolpyruvate + UDP-N-acetyl-alpha-D-glucosamine = UDP-N-acetyl-3-O-(1-carboxyvinyl)-alpha-D-glucosamine + phosphate. The protein operates within cell wall biogenesis; peptidoglycan biosynthesis. Its function is as follows. Cell wall formation. Adds enolpyruvyl to UDP-N-acetylglucosamine. The polypeptide is UDP-N-acetylglucosamine 1-carboxyvinyltransferase (Nostoc sp. (strain PCC 7120 / SAG 25.82 / UTEX 2576)).